A 65-amino-acid polypeptide reads, in one-letter code: Large ribosomal subunit protein bL35 (65 aa).

The protein belongs to the bacterial ribosomal protein bL35 family.

This chain is Large ribosomal subunit protein bL35, found in Parabacteroides distasonis (strain ATCC 8503 / DSM 20701 / CIP 104284 / JCM 5825 / NCTC 11152).